The primary structure comprises 305 residues: Aurasperone B biosynthesis cluster protein A (305 aa).

The first 26 residues, Met1–Gly26, serve as a signal peptide directing secretion. Asn29, Asn34, Asn64, Asn83, Asn132, Asn183, Asn218, and Asn288 each carry an N-linked (GlcNAc...) asparagine glycan.

The protein belongs to the bfoA family.

In terms of biological role, part of the gene cluster that mediates the biosynthesis of aurasperone B, a dimeric gamma-naphthopyrone. The first step in the biosynthesis of aurasperone B is the production of gamma-naphthopyrone precursor YWA1 by the non-reducing polyketide synthase albA, via condensation of one acetyl-CoA starter unit with 6 malonyl-CoA units. YWA1 is then methylated by aunE at position C-6 to yield foncesin which is further methylated at position C-8 by aunD to produce fonsecin B. A key enzyme in the biosynthetic pathway is the cytochrome P450 monooxygenase aunB which catalyzes the oxidative dimerization of fonsecin B to aurasperone B. AunB also catalyzes the oxidative dimerization of rubrofusarin B into aurasperone A. The chain is Aurasperone B biosynthesis cluster protein A from Aspergillus niger (strain ATCC 1015 / CBS 113.46 / FGSC A1144 / LSHB Ac4 / NCTC 3858a / NRRL 328 / USDA 3528.7).